The primary structure comprises 340 residues: Agmatinase, mitochondrial (340 aa).

Residues His-150, Asp-173, His-175, Asp-177, Asp-264, and Asp-266 each contribute to the Mn(2+) site.

The protein belongs to the arginase family. Agmatinase subfamily. Requires Mn(2+) as cofactor.

The protein localises to the mitochondrion. The enzyme catalyses agmatine + H2O = urea + putrescine. The protein operates within amine and polyamine biosynthesis; putrescine biosynthesis via agmatine pathway; putrescine from agmatine: step 1/1. This chain is Agmatinase, mitochondrial (AGMAT), found in Gallus gallus (Chicken).